The primary structure comprises 181 residues: Adenine phosphoribosyltransferase (181 aa).

Belongs to the purine/pyrimidine phosphoribosyltransferase family. As to quaternary structure, homodimer.

It localises to the cytoplasm. It carries out the reaction AMP + diphosphate = 5-phospho-alpha-D-ribose 1-diphosphate + adenine. The protein operates within purine metabolism; AMP biosynthesis via salvage pathway; AMP from adenine: step 1/1. In terms of biological role, catalyzes a salvage reaction resulting in the formation of AMP, that is energically less costly than de novo synthesis. The sequence is that of Adenine phosphoribosyltransferase from Aliivibrio fischeri (strain ATCC 700601 / ES114) (Vibrio fischeri).